A 238-amino-acid polypeptide reads, in one-letter code: Purine nucleoside phosphorylase DeoD-type (238 aa).

Histidine 4 contributes to the a purine D-ribonucleoside binding site. Phosphate is bound by residues glycine 20, arginine 24, arginine 43, and 87–90 (RIGS). A purine D-ribonucleoside-binding positions include 181-183 (EME) and 205-206 (SD). The Proton donor role is filled by aspartate 206.

The protein belongs to the PNP/UDP phosphorylase family. As to quaternary structure, homohexamer; trimer of homodimers.

It catalyses the reaction a purine D-ribonucleoside + phosphate = a purine nucleobase + alpha-D-ribose 1-phosphate. The enzyme catalyses a purine 2'-deoxy-D-ribonucleoside + phosphate = a purine nucleobase + 2-deoxy-alpha-D-ribose 1-phosphate. In terms of biological role, catalyzes the reversible phosphorolytic breakdown of the N-glycosidic bond in the beta-(deoxy)ribonucleoside molecules, with the formation of the corresponding free purine bases and pentose-1-phosphate. The polypeptide is Purine nucleoside phosphorylase DeoD-type (Mycoplasma pneumoniae (strain ATCC 29342 / M129 / Subtype 1) (Mycoplasmoides pneumoniae)).